We begin with the raw amino-acid sequence, 423 residues long: D-tagatose-1,6-bisphosphate aldolase subunit GatZ (423 aa).

The protein belongs to the GatZ/KbaZ family. GatZ subfamily. As to quaternary structure, forms a complex with GatY.

It functions in the pathway carbohydrate metabolism; D-tagatose 6-phosphate degradation; D-glyceraldehyde 3-phosphate and glycerone phosphate from D-tagatose 6-phosphate: step 2/2. Functionally, component of the tagatose-1,6-bisphosphate aldolase GatYZ that is required for full activity and stability of the Y subunit. Could have a chaperone-like function for the proper and stable folding of GatY. When expressed alone, GatZ does not show any aldolase activity. Is involved in the catabolism of galactitol. The chain is D-tagatose-1,6-bisphosphate aldolase subunit GatZ from Klebsiella pneumoniae subsp. pneumoniae (strain ATCC 700721 / MGH 78578).